We begin with the raw amino-acid sequence, 208 residues long: 3-isopropylmalate dehydratase small subunit 2 (208 aa).

The tract at residues 163–208 (EGERLDNASTSAGHGHAGTPLGDDPAKEDGPRPEQASGHQKEEHHA) is disordered.

Belongs to the LeuD family. LeuD type 2 subfamily. Heterodimer of LeuC and LeuD.

The catalysed reaction is (2R,3S)-3-isopropylmalate = (2S)-2-isopropylmalate. The protein operates within amino-acid biosynthesis; L-leucine biosynthesis; L-leucine from 3-methyl-2-oxobutanoate: step 2/4. Functionally, catalyzes the isomerization between 2-isopropylmalate and 3-isopropylmalate, via the formation of 2-isopropylmaleate. This chain is 3-isopropylmalate dehydratase small subunit 2 (leuD2), found in Deinococcus radiodurans (strain ATCC 13939 / DSM 20539 / JCM 16871 / CCUG 27074 / LMG 4051 / NBRC 15346 / NCIMB 9279 / VKM B-1422 / R1).